Consider the following 174-residue polypeptide: Vimentin-type intermediate filament-associated coiled-coil protein (174 aa).

Residues 7–97 (LQIREANAHL…DQRDQMIQQL (91 aa)) are a coiled coil. A disordered region spans residues 128–174 (GPLPASHSHRAQLLPDGPGPPLGNNMGKEEGQDDQDDQQPAVFGTTV).

It is found in the cytoplasm. This is Vimentin-type intermediate filament-associated coiled-coil protein (Vmac) from Mus musculus (Mouse).